Reading from the N-terminus, the 136-residue chain is Large ribosomal subunit protein bL17 (136 aa).

This sequence belongs to the bacterial ribosomal protein bL17 family. As to quaternary structure, part of the 50S ribosomal subunit. Contacts protein L32.

The protein is Large ribosomal subunit protein bL17 of Rickettsia prowazekii (strain Madrid E).